A 734-amino-acid polypeptide reads, in one-letter code: NAD(P)H-quinone oxidoreductase subunit 5, chloroplastic (734 aa).

A run of 16 helical transmembrane segments spans residues 9–29 (WVIP…LFLV), 39–59 (IWAF…VHLS), 89–109 (IDPL…LVLI), 125–145 (FVYI…SNLI), 147–167 (IYFF…FWFT), 185–205 (GDFG…SLEF), 224–244 (LLTI…SAQF), 258–278 (TPIS…FLIA), 280–300 (LLPL…IGTL), 327–347 (LGYM…FHLI), 354–374 (ALLF…VGYS), 396–416 (TCFL…CFWS), 425–445 (WLYS…TAFY), 542–562 (LFPL…GIHF), 605–625 (SLAI…YSFF), and 714–734 (ISSY…FFLS).

Belongs to the complex I subunit 5 family. In terms of assembly, NDH is composed of at least 16 different subunits, 5 of which are encoded in the nucleus.

The protein resides in the plastid. Its subcellular location is the chloroplast thylakoid membrane. It carries out the reaction a plastoquinone + NADH + (n+1) H(+)(in) = a plastoquinol + NAD(+) + n H(+)(out). The catalysed reaction is a plastoquinone + NADPH + (n+1) H(+)(in) = a plastoquinol + NADP(+) + n H(+)(out). NDH shuttles electrons from NAD(P)H:plastoquinone, via FMN and iron-sulfur (Fe-S) centers, to quinones in the photosynthetic chain and possibly in a chloroplast respiratory chain. The immediate electron acceptor for the enzyme in this species is believed to be plastoquinone. Couples the redox reaction to proton translocation, and thus conserves the redox energy in a proton gradient. This Oryza nivara (Indian wild rice) protein is NAD(P)H-quinone oxidoreductase subunit 5, chloroplastic (ndhF).